Reading from the N-terminus, the 156-residue chain is ATP synthase subunit b (156 aa).

Residues Leu7–Leu29 traverse the membrane as a helical segment.

The protein belongs to the ATPase B chain family. In terms of assembly, F-type ATPases have 2 components, F(1) - the catalytic core - and F(0) - the membrane proton channel. F(1) has five subunits: alpha(3), beta(3), gamma(1), delta(1), epsilon(1). F(0) has three main subunits: a(1), b(2) and c(10-14). The alpha and beta chains form an alternating ring which encloses part of the gamma chain. F(1) is attached to F(0) by a central stalk formed by the gamma and epsilon chains, while a peripheral stalk is formed by the delta and b chains.

The protein resides in the cell inner membrane. Functionally, f(1)F(0) ATP synthase produces ATP from ADP in the presence of a proton or sodium gradient. F-type ATPases consist of two structural domains, F(1) containing the extramembraneous catalytic core and F(0) containing the membrane proton channel, linked together by a central stalk and a peripheral stalk. During catalysis, ATP synthesis in the catalytic domain of F(1) is coupled via a rotary mechanism of the central stalk subunits to proton translocation. Its function is as follows. Component of the F(0) channel, it forms part of the peripheral stalk, linking F(1) to F(0). In Vibrio alginolyticus, this protein is ATP synthase subunit b.